Consider the following 756-residue polypeptide: Serine/threonine-protein kinase CBK1 (756 aa).

2 disordered regions span residues 1 to 180 and 242 to 261; these read MYNS…SYSS and QQQQ…NNGT. Over residues 23–34 the composition is skewed to low complexity; it reads QQQDQQHQQQQQ. A compositionally biased stretch (polar residues) spans 53-77; it reads FSSNYMKEQGSHQSLQEHLQRETGN. Thr-109 bears the Phosphothreonine mark. Over residues 120–180 the composition is skewed to polar residues; the sequence is HNNNSQSMVQ…TLRSNGSYSS (61 aa). A compositionally biased stretch (low complexity) spans 242–255; the sequence is QQQQQQQSQSPVQS. In terms of domain architecture, Protein kinase spans 352-672; sequence FHTVKVIGKG…ADEIKSHPFF (321 aa). ATP-binding positions include 358 to 366 and Lys-381; that span reads IGKGAFGEV. Residue Asp-475 is the Proton acceptor of the active site. Positions 673–754 constitute an AGC-kinase C-terminal domain; sequence RGVDWNTIRQ…SRFDYLTRKN (82 aa). The segment at 707-732 is disordered; the sequence is NVPDSPAMAQAAKQREQMTKQGGSAP.

Belongs to the protein kinase superfamily. STE Ser/Thr protein kinase family. COT1 subfamily. Associates with PAG1/TAO3 and interacts with MOB2.

It carries out the reaction L-seryl-[protein] + ATP = O-phospho-L-seryl-[protein] + ADP + H(+). It catalyses the reaction L-threonyl-[protein] + ATP = O-phospho-L-threonyl-[protein] + ADP + H(+). Its function is as follows. Protein kinase that seems to play a role in the regulation of cell morphogenesis and proliferation. This is Serine/threonine-protein kinase CBK1 (CBK1) from Saccharomyces cerevisiae (strain ATCC 204508 / S288c) (Baker's yeast).